The primary structure comprises 393 residues: Argininosuccinate synthase (393 aa).

ATP-binding positions include 10 to 18 and A37; that span reads AYSGGLDTS. Residue Y88 participates in L-citrulline binding. Position 118 (G118) interacts with ATP. Residues T120, N124, and D125 each coordinate L-aspartate. Position 124 (N124) interacts with L-citrulline. The L-citrulline site is built by R128, S176, S185, E261, and Y273.

This sequence belongs to the argininosuccinate synthase family. Type 1 subfamily. Homotetramer.

It localises to the cytoplasm. The enzyme catalyses L-citrulline + L-aspartate + ATP = 2-(N(omega)-L-arginino)succinate + AMP + diphosphate + H(+). It participates in amino-acid biosynthesis; L-arginine biosynthesis; L-arginine from L-ornithine and carbamoyl phosphate: step 2/3. This is Argininosuccinate synthase from Carsonella ruddii (strain PV).